Reading from the N-terminus, the 428-residue chain is Glutamyl-tRNA reductase (428 aa).

Substrate is bound by residues 49–52, Ser-109, 114–116, and Gln-120; these read TCNR and EGQ. Cys-50 acts as the Nucleophile in catalysis. 189–194 serves as a coordination point for NADP(+); sequence GAGKMS.

The protein belongs to the glutamyl-tRNA reductase family. In terms of assembly, homodimer.

The catalysed reaction is (S)-4-amino-5-oxopentanoate + tRNA(Glu) + NADP(+) = L-glutamyl-tRNA(Glu) + NADPH + H(+). It functions in the pathway porphyrin-containing compound metabolism; protoporphyrin-IX biosynthesis; 5-aminolevulinate from L-glutamyl-tRNA(Glu): step 1/2. Its pathway is porphyrin-containing compound metabolism; chlorophyll biosynthesis. Functionally, catalyzes the NADPH-dependent reduction of glutamyl-tRNA(Glu) to glutamate 1-semialdehyde (GSA). In Gloeothece citriformis (strain PCC 7424) (Cyanothece sp. (strain PCC 7424)), this protein is Glutamyl-tRNA reductase.